Here is a 50-residue protein sequence, read N- to C-terminus: Sperm protamine P1 (50 aa).

This sequence belongs to the protamine P1 family. As to expression, testis.

It localises to the nucleus. It is found in the chromosome. Its function is as follows. Protamines substitute for histones in the chromatin of sperm during the haploid phase of spermatogenesis. They compact sperm DNA into a highly condensed, stable and inactive complex. The protein is Sperm protamine P1 (PRM1) of Trachypithecus vetulus (Purple-faced langur).